The following is a 236-amino-acid chain: Ribose-5-phosphate isomerase A (236 aa).

Substrate contacts are provided by residues 31–34, 88–91, and 101–104; these read TGST, DGAD, and KGGG. The Proton acceptor role is filled by E110. K128 is a substrate binding site.

It belongs to the ribose 5-phosphate isomerase family. As to quaternary structure, homodimer.

The catalysed reaction is aldehydo-D-ribose 5-phosphate = D-ribulose 5-phosphate. Its pathway is carbohydrate degradation; pentose phosphate pathway; D-ribose 5-phosphate from D-ribulose 5-phosphate (non-oxidative stage): step 1/1. Catalyzes the reversible conversion of ribose-5-phosphate to ribulose 5-phosphate. The polypeptide is Ribose-5-phosphate isomerase A (Thermosynechococcus vestitus (strain NIES-2133 / IAM M-273 / BP-1)).